The sequence spans 209 residues: Putative amino acid efflux protein YcgF (209 aa).

6 consecutive transmembrane segments (helical) span residues 1-21 (MNIF…VGPV), 39-59 (IFGL…YFGL), 62-82 (FLTA…VLTY), 110-130 (FASG…WLGI), 147-167 (LLIY…CMAI), and 184-204 (LTGI…YQGI).

This sequence belongs to the Rht family.

It localises to the cell membrane. The sequence is that of Putative amino acid efflux protein YcgF (ycgF) from Bacillus subtilis (strain 168).